Consider the following 385-residue polypeptide: S-adenosylmethionine synthase (385 aa).

An ATP-binding site is contributed by H14. Position 16 (D16) interacts with Mg(2+). A K(+)-binding site is contributed by E42. L-methionine-binding residues include E55 and Q98. The flexible loop stretch occupies residues 98–108 (QSGDIAQAVDN). Residues 165–167 (DAK), 232–233 (RF), D241, 247–248 (RK), A264, and K268 contribute to the ATP site. D241 is an L-methionine binding site. Position 272 (K272) interacts with L-methionine.

Belongs to the AdoMet synthase family. Homotetramer; dimer of dimers. The cofactor is Mg(2+). Requires K(+) as cofactor.

It localises to the cytoplasm. The catalysed reaction is L-methionine + ATP + H2O = S-adenosyl-L-methionine + phosphate + diphosphate. It participates in amino-acid biosynthesis; S-adenosyl-L-methionine biosynthesis; S-adenosyl-L-methionine from L-methionine: step 1/1. In terms of biological role, catalyzes the formation of S-adenosylmethionine (AdoMet) from methionine and ATP. The overall synthetic reaction is composed of two sequential steps, AdoMet formation and the subsequent tripolyphosphate hydrolysis which occurs prior to release of AdoMet from the enzyme. This Leuconostoc mesenteroides subsp. mesenteroides (strain ATCC 8293 / DSM 20343 / BCRC 11652 / CCM 1803 / JCM 6124 / NCDO 523 / NBRC 100496 / NCIMB 8023 / NCTC 12954 / NRRL B-1118 / 37Y) protein is S-adenosylmethionine synthase.